The chain runs to 432 residues: D-amino acid dehydrogenase 1 (432 aa).

FAD is bound at residue 3–17 (VLILGSGVVGTVSAY).

The protein belongs to the DadA oxidoreductase family. FAD is required as a cofactor.

It catalyses the reaction a D-alpha-amino acid + A + H2O = a 2-oxocarboxylate + AH2 + NH4(+). Oxidative deamination of D-amino acids. The chain is D-amino acid dehydrogenase 1 (dadA1) from Pseudomonas putida (strain ATCC 47054 / DSM 6125 / CFBP 8728 / NCIMB 11950 / KT2440).